A 223-amino-acid polypeptide reads, in one-letter code: Serum amyloid P-component (223 aa).

The N-terminal stretch at 1–19 (MNKPLLWISVLTSLLEAFA) is a signal peptide. The Pentraxin (PTX) domain occupies 24–223 (SGKVFVFPRE…YVIIKPLVWV (200 aa)). A glycan (N-linked (GlcNAc...) asparagine) is linked at N51. An intrachain disulfide couples C55 to C114. Ca(2+) is bound by residues D77, N78, E155, Q156, D157, and Q167.

It belongs to the pentraxin family. In terms of assembly, homopentamer. Pentraxin (or pentaxin) have a discoid arrangement of 5 non-covalently bound subunits. It depends on Ca(2+) as a cofactor. In terms of processing, N-glycosylated with a complex biantennary oligosaccharide chain with a sialic acid at the end (disialo-SAP). Monosialo-SAP as well as asioalo-SAP are also detected. Found in serum and urine.

Its subcellular location is the secreted. Its function is as follows. Can interact with DNA and histones and may scavenge nuclear material released from damaged circulating cells. May also function as a calcium-dependent lectin. In Homo sapiens (Human), this protein is Serum amyloid P-component (APCS).